The chain runs to 21 residues: Peptide PGLa-BM2 (21 aa).

Alanine amide is present on Ala-21.

As to expression, expressed by the skin glands.

It is found in the secreted. Functionally, antimicrobial peptide. This Xenopus boumbaensis (Mawa clawed frog) protein is Peptide PGLa-BM2.